The sequence spans 84 residues: Cell division topological specificity factor (84 aa).

The protein belongs to the MinE family.

Functionally, prevents the cell division inhibition by proteins MinC and MinD at internal division sites while permitting inhibition at polar sites. This ensures cell division at the proper site by restricting the formation of a division septum at the midpoint of the long axis of the cell. This chain is Cell division topological specificity factor, found in Pseudomonas syringae pv. syringae (strain B728a).